A 187-amino-acid chain; its full sequence is dCTP deaminase (187 aa).

DCTP-binding positions include 110–115 (KSTYAR), 134–136 (TLE), Gln155, Tyr169, and Gln179. Catalysis depends on Glu136, which acts as the Proton donor/acceptor.

This sequence belongs to the dCTP deaminase family. Homotrimer.

It catalyses the reaction dCTP + H2O + H(+) = dUTP + NH4(+). It participates in pyrimidine metabolism; dUMP biosynthesis; dUMP from dCTP (dUTP route): step 1/2. Its function is as follows. Catalyzes the deamination of dCTP to dUTP. This Bordetella bronchiseptica (strain ATCC BAA-588 / NCTC 13252 / RB50) (Alcaligenes bronchisepticus) protein is dCTP deaminase.